The chain runs to 508 residues: Anthranilate synthase component 1 (508 aa).

Residues S49 and 282–284 (PYM) each bind L-tryptophan. 317–318 (GT) is a binding site for chorismate. E344 provides a ligand contact to Mg(2+). Residues Y432, R452, 466 to 468 (GAG), and G468 contribute to the chorismate site. E481 provides a ligand contact to Mg(2+).

The protein belongs to the anthranilate synthase component I family. Heterotetramer consisting of two non-identical subunits: a beta subunit (TrpG) and a large alpha subunit (TrpE). It depends on Mg(2+) as a cofactor.

It carries out the reaction chorismate + L-glutamine = anthranilate + pyruvate + L-glutamate + H(+). Its pathway is amino-acid biosynthesis; L-tryptophan biosynthesis; L-tryptophan from chorismate: step 1/5. With respect to regulation, feedback inhibited by tryptophan. Functionally, part of a heterotetrameric complex that catalyzes the two-step biosynthesis of anthranilate, an intermediate in the biosynthesis of L-tryptophan. In the first step, the glutamine-binding beta subunit (TrpG) of anthranilate synthase (AS) provides the glutamine amidotransferase activity which generates ammonia as a substrate that, along with chorismate, is used in the second step, catalyzed by the large alpha subunit of AS (TrpE) to produce anthranilate. In the absence of TrpG, TrpE can synthesize anthranilate directly from chorismate and high concentrations of ammonia. The polypeptide is Anthranilate synthase component 1 (trpE) (Bacillus caldotenax).